We begin with the raw amino-acid sequence, 299 residues long: tRNA dimethylallyltransferase (299 aa).

10-17 is a binding site for ATP; it reads GPTAVGKT. 12 to 17 is a binding site for substrate; the sequence is TAVGKT. An interaction with substrate tRNA region spans residues 35–38; that stretch reads DSQQ.

The protein belongs to the IPP transferase family. As to quaternary structure, monomer. Mg(2+) serves as cofactor.

The enzyme catalyses adenosine(37) in tRNA + dimethylallyl diphosphate = N(6)-dimethylallyladenosine(37) in tRNA + diphosphate. Its function is as follows. Catalyzes the transfer of a dimethylallyl group onto the adenine at position 37 in tRNAs that read codons beginning with uridine, leading to the formation of N6-(dimethylallyl)adenosine (i(6)A). This is tRNA dimethylallyltransferase from Streptococcus thermophilus (strain CNRZ 1066).